The following is a 188-amino-acid chain: F-box only protein 36 (188 aa).

An F-box domain is found at 91–137 (FDFLERLSDDLLLNIISYLDLEDIARLCQTSHRFAKLCMSDKLWEQI).

In terms of assembly, directly interacts with SKP1 and CUL1.

Its function is as follows. Substrate-recognition component of the SCF (SKP1-CUL1-F-box protein)-type E3 ubiquitin ligase complex. The protein is F-box only protein 36 (FBXO36) of Pongo abelii (Sumatran orangutan).